The following is a 145-amino-acid chain: Large ribosomal subunit protein uL15 (145 aa).

A disordered region spans residues 1–58 (MFNLLKPKGASKRRKIVGRGPGSGLGKTSGRGQKGQKARNTSPRLGFEGGQTPLYRRL). The span at 19–33 (RGPGSGLGKTSGRGQ) shows a compositional bias: gly residues.

The protein belongs to the universal ribosomal protein uL15 family. Part of the 50S ribosomal subunit.

Functionally, binds to the 23S rRNA. This chain is Large ribosomal subunit protein uL15, found in Borrelia garinii subsp. bavariensis (strain ATCC BAA-2496 / DSM 23469 / PBi) (Borreliella bavariensis).